A 349-amino-acid chain; its full sequence is MSRAKRKIEHIQHALSTADQGASGFDDITFVHQSLPDVRMNDIHLHTALGELSLSSPFFINAMTGGGGKQTFEINKGLAEAAKHCRIAMAVGSQTSALRDNKQRGTFEIVRKVNKNGIIFANIGSEATVDDAKRAVDMIEADGLQIHLNVVQELVMPEGDRDFTGVLLRIEQIVQAVQVPVIVKEVGFGMSKETASRLEEVGVKIIDVGGLGGTNFARIENKRRSNIITYFNDWGIPTAASIVEVAQTSPSLVVIGSGGVRTALDAAKAIALGASAVGMAGPLLRTLVEQGVEALVASIEELHHDLTLIMGALGAKTIDKLQRVPLVIRGDTHHWLTERGFDTKVYSCR.

Position 6–7 (6–7 (RK)) interacts with substrate. FMN is bound by residues 62 to 64 (AMT), Ser-93, and Asn-122. Gln-152 contacts substrate. Glu-153 contributes to the Mg(2+) binding site. FMN-binding positions include Lys-184, Thr-214, 259–261 (GVR), and 280–281 (AG).

Belongs to the IPP isomerase type 2 family. Homooctamer. Dimer of tetramers. It depends on FMN as a cofactor. NADPH is required as a cofactor. The cofactor is Mg(2+).

It localises to the cytoplasm. It carries out the reaction isopentenyl diphosphate = dimethylallyl diphosphate. Its function is as follows. Involved in the biosynthesis of isoprenoids. Catalyzes the 1,3-allylic rearrangement of the homoallylic substrate isopentenyl (IPP) to its allylic isomer, dimethylallyl diphosphate (DMAPP). The sequence is that of Isopentenyl-diphosphate delta-isomerase from Geobacillus sp. (strain WCH70).